The following is a 447-amino-acid chain: MSITKVPKKVVTLAYGCQMSERDADTLTEISSQKGYVRSQELEQADLIIVNTCCVRESAENKILGKIGELKHLKEANPQLKIAISGCMVQQPGALERLRKRAPHVDIWAGTHNIHEFQRLLEEAEEKGKVAEVWEKPRETQESVLLAAKGKLKAYVNISYGCNNFCTYCIVPHVRGRERSRQPEEILAEIRALVETGCREVTLLGQNVNSYGQDLDRAYDFADLLKDVDSIDGLWRVRFMTSHPKDLSDKLIETIAAGTHLCEHIHLPFQAGSDEILKGMNRKYTREYYLSRIAQIKVIIPQVSLTTDIIVGFPGETEEDFEQTLELIRQVRYSQAFTFMYSKRSGTPAAQMAEQIPLDIKKRRLQQLITVQNAQSLAWRQEMIGKTCEVLVEGPSKSNPDRLTGRTRGYELVVFPGEAQLIGTLVQVLIQDANSWTLFGECRADRH.

An MTTase N-terminal domain is found at 8-126 (KKVVTLAYGC…FQRLLEEAEE (119 aa)). [4Fe-4S] cluster is bound by residues Cys-17, Cys-53, Cys-87, Cys-162, Cys-166, and Cys-169. One can recognise a Radical SAM core domain in the interval 148–378 (AKGKLKAYVN…ITVQNAQSLA (231 aa)). The region spanning 381–444 (QEMIGKTCEV…SWTLFGECRA (64 aa)) is the TRAM domain.

The protein belongs to the methylthiotransferase family. MiaB subfamily. Monomer. Requires [4Fe-4S] cluster as cofactor.

The protein resides in the cytoplasm. The catalysed reaction is N(6)-dimethylallyladenosine(37) in tRNA + (sulfur carrier)-SH + AH2 + 2 S-adenosyl-L-methionine = 2-methylsulfanyl-N(6)-dimethylallyladenosine(37) in tRNA + (sulfur carrier)-H + 5'-deoxyadenosine + L-methionine + A + S-adenosyl-L-homocysteine + 2 H(+). Functionally, catalyzes the methylthiolation of N6-(dimethylallyl)adenosine (i(6)A), leading to the formation of 2-methylthio-N6-(dimethylallyl)adenosine (ms(2)i(6)A) at position 37 in tRNAs that read codons beginning with uridine. This Desulfitobacterium hafniense (strain Y51) protein is tRNA-2-methylthio-N(6)-dimethylallyladenosine synthase.